The sequence spans 537 residues: Synaptotagmin-2 (537 aa).

Topologically, residues methionine 1–glycine 2 are cytoplasmic. A helical transmembrane segment spans residues isoleucine 3–isoleucine 23. Topologically, residues glycine 24–serine 537 are lumenal. The region spanning aspartate 67 to methionine 249 is the SMP-LTD domain. The segment at glutamine 227–glycine 505 is phospholipid binding. 2 C2 domains span residues tryptophan 240–leucine 362 and aspartate 402–tyrosine 517. 4 residues coordinate Ca(2+): aspartate 276, aspartate 282, aspartate 332, and glutamate 334.

It belongs to the synaptotagmin family. The cofactor is Ca(2+).

The protein resides in the golgi apparatus membrane. In terms of biological role, may play an important role in regulating an unconventional protein trafficking from the cytosol to the extracellular matrix. The protein is Synaptotagmin-2 (SYT2) of Arabidopsis thaliana (Mouse-ear cress).